The primary structure comprises 483 residues: Rhamnulokinase (483 aa).

11-15 contributes to the ATP binding site; that stretch reads ASSGR. Substrate-binding positions include G79 and 234-236; that span reads HDT. Residue D235 is the Proton acceptor of the active site. T257 provides a ligand contact to ATP. N294 is a substrate binding site. An ATP-binding site is contributed by Q302. C352 and C369 are oxidised to a cystine. ATP is bound at residue G401.

The protein belongs to the rhamnulokinase family. Requires Mg(2+) as cofactor.

The enzyme catalyses L-rhamnulose + ATP = L-rhamnulose 1-phosphate + ADP + H(+). It participates in carbohydrate degradation; L-rhamnose degradation; glycerone phosphate from L-rhamnose: step 2/3. Its function is as follows. Involved in the catabolism of L-rhamnose (6-deoxy-L-mannose). Catalyzes the transfer of the gamma-phosphate group from ATP to the 1-hydroxyl group of L-rhamnulose to yield L-rhamnulose 1-phosphate. The protein is Rhamnulokinase of Listeria monocytogenes serovar 1/2a (strain ATCC BAA-679 / EGD-e).